Reading from the N-terminus, the 448-residue chain is Glutamyl-tRNA reductase (448 aa).

Substrate-binding positions include 49–52, serine 109, 114–116, and glutamine 120; these read TCNR and ETQ. Residue cysteine 50 is the Nucleophile of the active site. 189–194 is a binding site for NADP(+); sequence GAGETG. A disordered region spans residues 427–448; it reads PVDEVEETDATSAKAPLRALMR.

This sequence belongs to the glutamyl-tRNA reductase family. Homodimer.

The enzyme catalyses (S)-4-amino-5-oxopentanoate + tRNA(Glu) + NADP(+) = L-glutamyl-tRNA(Glu) + NADPH + H(+). The protein operates within porphyrin-containing compound metabolism; protoporphyrin-IX biosynthesis; 5-aminolevulinate from L-glutamyl-tRNA(Glu): step 1/2. Catalyzes the NADPH-dependent reduction of glutamyl-tRNA(Glu) to glutamate 1-semialdehyde (GSA). This is Glutamyl-tRNA reductase from Exiguobacterium sp. (strain ATCC BAA-1283 / AT1b).